Reading from the N-terminus, the 1021-residue chain is Ribosome quality control complex subunit 2 (1021 aa).

A coiled-coil region spans residues 348–388; it reads IEAQKLKKRAHDRLATAERRLESAKEDQARKLQSLQDAQAT. The segment at 457-484 is disordered; that stretch reads NPESVDNSDESSETSDDDLDDSDDDNKV. The segment covering 462-480 has biased composition (acidic residues); it reads DNSDESSETSDDDLDDSDD. A Phosphoserine modification is found at serine 478. 2 coiled-coil regions span residues 507 to 546 and 698 to 727; these read NARKQYELRREALIKETKTAEAASKALKSTQRKIEQDLKR and DEKSSERRKARRLEMEVVETQGKVSELKME. Composition is skewed to polar residues over residues 746–761 and 839–856; these read YNEDTNNQSTPDTTGS and ISSQIPSNDSSNVQTPTA. Disordered regions lie at residues 746 to 801 and 832 to 905; these read YNED…TALE and HAAR…VESF. The segment covering 876 to 905 has biased composition (basic and acidic residues); the sequence is DQSRNSEAENEKGLSTEQRDEKKHAKVESF.

Belongs to the NEMF family. Component of the ribosome quality control complex (RQC), composed of the E3 ubiquitin ligase rkr1/ltn1, rqc1 and mtr1/rqc2, as well as cdc48 and its ubiquitin-binding cofactors associated with the 60S ribosomal subunit. RQC2 binds to the 40S-binding surface of tRNAs.

It is found in the cytoplasm. Key component of the ribosome quality control complex (RQC), a ribosome-associated complex that mediates the extraction of incompletely synthesized nascent chains from stalled ribosomes as well as their ubiquitin-mediated proteasomal degradation. Thereby, frees 60S subunit ribosomes from the stalled translation complex and prevents the accumulation of nascent polypeptide chains that are potentially toxic for the cell. Within the RQC complex, mtr1/rqc2 specifically binds stalled 60S ribosomal subunits by recognizing an exposed, nascent chain-conjugated tRNA moiety and promotes the recruitment of rkr1/ltn1 to stalled 60S subunits. Following binding to stalled 60S ribosomal subunits, mtr1/rqc2 mediates CAT tailing by recruiting alanine- and threonine-charged tRNA to the A-site and directing the elongation of stalled nascent chains independently of mRNA or 40S subunits, leading to non-templated C-terminal Ala and Thr extensions (CAT tails). CAT tails promote the rkr1/ltn1-mediated ubiquitination of incompletely synthesized nascent polypeptides: CAT tailing facilitates rkr1/ltn1-dependent ubiquitination by exposing lysine residues that would otherwise remain buried in the ribosomal exit tunnel. Following ubiquitination, incompletely synthesized nascent polypeptides are recognized by CDC48 and degraded by the proteasome. CAT-tailed proteins tend to aggregate and sequester chaperones and can induce proteotoxic stress; their rkr1/ltn1-dependent ubiquitination and degradation is required to prevent proteotoxic stress. This is Ribosome quality control complex subunit 2 from Schizosaccharomyces pombe (strain 972 / ATCC 24843) (Fission yeast).